The sequence spans 193 residues: Ion-translocating oxidoreductase complex subunit A (193 aa).

6 helical membrane passes run 5–25 (LLLF…FLGL), 39–59 (MGMG…AWLI), 63–83 (ILIP…VIAV), 102–122 (LLGI…VALL), 134–154 (ALYG…FAAI), and 171–191 (AIAL…SGLV).

This sequence belongs to the NqrDE/RnfAE family. The complex is composed of six subunits: RsxA, RsxB, RsxC, RsxD, RsxE and RsxG.

It is found in the cell inner membrane. Part of a membrane-bound complex that couples electron transfer with translocation of ions across the membrane. Required to maintain the reduced state of SoxR. The protein is Ion-translocating oxidoreductase complex subunit A of Shigella boydii serotype 18 (strain CDC 3083-94 / BS512).